A 404-amino-acid chain; its full sequence is Nicotinate phosphoribosyltransferase (404 aa).

Phosphohistidine; by autocatalysis is present on H224.

Belongs to the NAPRTase family. In terms of processing, transiently phosphorylated on a His residue during the reaction cycle. Phosphorylation strongly increases the affinity for substrates and increases the rate of nicotinate D-ribonucleotide production. Dephosphorylation regenerates the low-affinity form of the enzyme, leading to product release.

It carries out the reaction nicotinate + 5-phospho-alpha-D-ribose 1-diphosphate + ATP + H2O = nicotinate beta-D-ribonucleotide + ADP + phosphate + diphosphate. Its pathway is cofactor biosynthesis; NAD(+) biosynthesis; nicotinate D-ribonucleotide from nicotinate: step 1/1. Catalyzes the synthesis of beta-nicotinate D-ribonucleotide from nicotinate and 5-phospho-D-ribose 1-phosphate at the expense of ATP. This is Nicotinate phosphoribosyltransferase from Photorhabdus laumondii subsp. laumondii (strain DSM 15139 / CIP 105565 / TT01) (Photorhabdus luminescens subsp. laumondii).